The sequence spans 107 residues: uncharacterized protein (107 aa).

Residues 34 to 107 (FASKDKKDEK…SDNQKKDMSY (74 aa)) adopt a coiled-coil conformation.

This is an uncharacterized protein from Dictyostelium discoideum (Social amoeba).